Consider the following 571-residue polypeptide: Proline--tRNA ligase (571 aa).

Belongs to the class-II aminoacyl-tRNA synthetase family. ProS type 1 subfamily. In terms of assembly, homodimer.

The protein resides in the cytoplasm. It catalyses the reaction tRNA(Pro) + L-proline + ATP = L-prolyl-tRNA(Pro) + AMP + diphosphate. Functionally, catalyzes the attachment of proline to tRNA(Pro) in a two-step reaction: proline is first activated by ATP to form Pro-AMP and then transferred to the acceptor end of tRNA(Pro). As ProRS can inadvertently accommodate and process non-cognate amino acids such as alanine and cysteine, to avoid such errors it has two additional distinct editing activities against alanine. One activity is designated as 'pretransfer' editing and involves the tRNA(Pro)-independent hydrolysis of activated Ala-AMP. The other activity is designated 'posttransfer' editing and involves deacylation of mischarged Ala-tRNA(Pro). The misacylated Cys-tRNA(Pro) is not edited by ProRS. The chain is Proline--tRNA ligase from Shewanella baltica (strain OS185).